We begin with the raw amino-acid sequence, 149 residues long: Deoxyuridine 5'-triphosphate nucleotidohydrolase (149 aa).

Substrate-binding positions include 68-70 (RSG), asparagine 81, 85-87 (TID), and lysine 95.

This sequence belongs to the dUTPase family. Mg(2+) is required as a cofactor.

The enzyme catalyses dUTP + H2O = dUMP + diphosphate + H(+). Its pathway is pyrimidine metabolism; dUMP biosynthesis; dUMP from dCTP (dUTP route): step 2/2. Functionally, this enzyme is involved in nucleotide metabolism: it produces dUMP, the immediate precursor of thymidine nucleotides and it decreases the intracellular concentration of dUTP so that uracil cannot be incorporated into DNA. The protein is Deoxyuridine 5'-triphosphate nucleotidohydrolase of Bdellovibrio bacteriovorus (strain ATCC 15356 / DSM 50701 / NCIMB 9529 / HD100).